Reading from the N-terminus, the 140-residue chain is Immunity protein RhsIC (140 aa).

Its function is as follows. Putative immunity protein component of a toxin-immunity protein module, which may function as a cellular contact-dependent growth inhibition (CDI) system. Blocks the toxic effects of expression of the C-terminus (residues 1519-1658) of cognate toxin RhsC in E.coli. The protein is Immunity protein RhsIC (rhsIC) of Dickeya dadantii (strain 3937) (Erwinia chrysanthemi (strain 3937)).